The following is a 216-amino-acid chain: MNFNKIDLDNWKRKEIFNHYLNQQTTFSITTEIDISVLYRNIKQEGYKFYPAFIFLVTRVINSNTAFRTGYNSDGELGYWDKLEPLYTIFDGVSKTFSGIWTPVKNDFKEFYDLYLSDVEKYNGSGKLFPKTPIPENAFSLSIIPWTSFTGFNLNINNNSNYLLPIITAGKFINKGNSIYLPLSLQVHHSVCDGYHAGLFMNSIQELSDRPNDWLL.

His189 serves as the catalytic Proton acceptor.

The protein belongs to the chloramphenicol acetyltransferase family. In terms of assembly, homotrimer.

The catalysed reaction is chloramphenicol + acetyl-CoA = chloramphenicol 3-acetate + CoA. Functionally, this enzyme is an effector of chloramphenicol resistance in bacteria. In Staphylococcus aureus, this protein is Chloramphenicol acetyltransferase (cat).